The sequence spans 362 residues: Tryptophan 2,3-dioxygenase (362 aa).

Substrate contacts are provided by residues 40–44 (FIIVH) and R111. H297 provides a ligand contact to heme. Residue T311 participates in substrate binding.

The protein belongs to the tryptophan 2,3-dioxygenase family. Homotetramer. Requires heme as cofactor.

It catalyses the reaction L-tryptophan + O2 = N-formyl-L-kynurenine. The protein operates within amino-acid degradation; L-tryptophan degradation via kynurenine pathway; L-kynurenine from L-tryptophan: step 1/2. Functionally, heme-dependent dioxygenase that catalyzes the oxidative cleavage of the L-tryptophan (L-Trp) pyrrole ring and converts L-tryptophan to N-formyl-L-kynurenine. Catalyzes the oxidative cleavage of the indole moiety. This is Tryptophan 2,3-dioxygenase from Alteromonas mediterranea (strain DSM 17117 / CIP 110805 / LMG 28347 / Deep ecotype).